Here is a 1273-residue protein sequence, read N- to C-terminus: Kinesin-like protein KIN-7O (1273 aa).

One can recognise a Kinesin motor domain in the interval 3–327 (RIHVSVRARP…LQFASRALRV (325 aa)). 79–86 (GQTNSGKT) is an ATP binding site. Residues 333–408 (VNEILTDAAL…QRERVLQEQA (76 aa)) adopt a coiled-coil conformation. The interval 452 to 474 (SEDQSNVLSRGSSLESARSERET) is disordered. Positions 453–467 (EDQSNVLSRGSSLES) are enriched in polar residues. Coiled coils occupy residues 602-674 (EAIL…ESEV) and 751-1023 (VQSS…MEEE).

Belongs to the TRAFAC class myosin-kinesin ATPase superfamily. Kinesin family. KIN-7 subfamily.

This chain is Kinesin-like protein KIN-7O, found in Arabidopsis thaliana (Mouse-ear cress).